A 331-amino-acid polypeptide reads, in one-letter code: MSFFGFGQTAEIDIVLNDAETRKKVEHKTEDGKKDKYFLFYDGETVSGKVNVTLKTPGKRLEHYGIKIEFVGQIELYYDRGNHHEFVSLVKDLARPGELSQSQTFDFEFTHVEKPYESYTGQNVKLRYFLRATISRRLNDISKEMDIVVQTLCTYPEINSSIKMEVGIEDCLHIEFEYNKSKYHLRDVIVGKIYFLLVRIKIKHMEIDIIKRETTGTGPSVYHENDTIAKYEIMDGAPVRGESIPIRLFLAGYEMTPTMRDINKKFSVRYYLNLVLIDEEERRYFKQQEITLWRKGDIVRRSMSQQATIAAQRYEGSNPEPTSAQAKEETD.

Residues Ala310–Asp331 are disordered.

It belongs to the VPS26 family. In terms of assembly, component of the heterotrimeric retromer cargo-selective complex (CSC) which is believed to associate with variable sorting nexins to form functionally distinct retromer complex variants.

It localises to the cytoplasm. Its subcellular location is the membrane. The protein localises to the endosome. In terms of biological role, acts as a component of the retromer cargo-selective complex (CSC). The CSC is believed to be the core functional component of retromer or respective retromer complex variants acting to prevent missorting of selected transmembrane cargo proteins into the lysosomal degradation pathway. Retromer mediates retrograde transport of cargo proteins from endosomes to the trans-Golgi network (TGN). The sequence is that of Vacuolar protein sorting-associated protein 26B (vps26b) from Danio rerio (Zebrafish).